Consider the following 234-residue polypeptide: Chalcone--flavanone isomerase 1 (234 aa).

Thr-50, Asn-115, and Ser-192 together coordinate substrate.

Belongs to the chalcone isomerase family.

It carries out the reaction a chalcone = a flavanone.. It functions in the pathway secondary metabolite biosynthesis; flavonoid biosynthesis. Catalyzes the intramolecular cyclization of bicyclic chalcones into tricyclic (S)-flavanones. Responsible for the isomerization of 4,2',4',6'-tetrahydroxychalcone (also termed chalcone) into naringenin. This chain is Chalcone--flavanone isomerase 1 (CHI1), found in Vitis vinifera (Grape).